The chain runs to 231 residues: Large ribosomal subunit protein uL1 (231 aa).

The protein belongs to the universal ribosomal protein uL1 family. In terms of assembly, part of the 50S ribosomal subunit.

Functionally, binds directly to 23S rRNA. The L1 stalk is quite mobile in the ribosome, and is involved in E site tRNA release. Its function is as follows. Protein L1 is also a translational repressor protein, it controls the translation of the L11 operon by binding to its mRNA. The protein is Large ribosomal subunit protein uL1 of Francisella philomiragia subsp. philomiragia (strain ATCC 25017 / CCUG 19701 / FSC 153 / O#319-036).